The primary structure comprises 156 residues: Arginine repressor (156 aa).

This sequence belongs to the ArgR family.

Its subcellular location is the cytoplasm. It functions in the pathway amino-acid biosynthesis; L-arginine biosynthesis [regulation]. Its function is as follows. Regulates arginine biosynthesis genes. The polypeptide is Arginine repressor (Erwinia tasmaniensis (strain DSM 17950 / CFBP 7177 / CIP 109463 / NCPPB 4357 / Et1/99)).